The sequence spans 1939 residues: Myosin-4 (1939 aa).

A Myosin N-terminal SH3-like domain is found at 33 to 82; it reads DAKSSVFVVDAKESYVKATVQSREGGKVTAKTEGGATVTVKEDQVFSMNP. At S36 the chain carries Phosphoserine. Phosphothreonine occurs at positions 64 and 69. Phosphoserine is present on S79. A Myosin motor domain is found at 86 to 782; it reads DKIEDMAMMT…LLGTLEEMRD (697 aa). At K130 the chain carries N6,N6,N6-trimethyllysine. Position 179-186 (179-186) interacts with ATP; that stretch reads GESGAGKT. At Y389 the chain carries Phosphotyrosine. At T391 the chain carries Phosphothreonine. The residue at position 392 (S392) is a Phosphoserine. T419 carries the phosphothreonine modification. Residue Y424 is modified to Phosphotyrosine. Phosphoserine is present on S625. Residues 659–681 form an actin-binding region; that stretch reads LNKLMTNLKSTHPHFVRCLIPNE. H757 is subject to Pros-methylhistidine. The actin-binding stretch occupies residues 761–775; the sequence is KFGHTKVFFKAGLLG. T776 is subject to Phosphothreonine. The region spanning 785-814 is the IQ domain; sequence LAQLITRTQAVCRGYLMRVEFRKMMERRES. Positions 843–1939 form a coiled coil; it reads LLKSAETEKE…EVHTKVISEE (1097 aa). Phosphoserine occurs at positions 1092 and 1096. Disordered regions lie at residues 1128 to 1147 and 1153 to 1172; these read AERASRAKAEKQRSDLSREL and RLEEAGGATSAQIEMNKKRE. S1162 and S1237 each carry phosphoserine. T1241 is subject to Phosphothreonine. Position 1243 is a phosphoserine (S1243). A Phosphothreonine modification is found at T1255. A Phosphoserine modification is found at S1261. T1265 carries the phosphothreonine modification. S1278 is subject to Phosphoserine. At T1286 the chain carries Phosphothreonine. S1288, S1292, S1303, S1306, and S1413 each carry phosphoserine. Y1464 is modified (phosphotyrosine). The residue at position 1467 (T1467) is a Phosphothreonine. Phosphoserine is present on S1474. Residue Y1492 is modified to Phosphotyrosine. The residue at position 1495 (S1495) is a Phosphoserine. T1501 carries the phosphothreonine modification. The residue at position 1514 (S1514) is a Phosphoserine. T1517 is modified (phosphothreonine). A phosphoserine mark is found at S1542, S1547, S1554, S1574, S1600, S1603, S1714, and S1726. Phosphothreonine occurs at positions 1730 and 1736. S1739 is modified (phosphoserine).

It belongs to the TRAFAC class myosin-kinesin ATPase superfamily. Myosin family. Muscle myosin is a hexameric protein that consists of 2 heavy chain subunits (MHC), 2 alkali light chain subunits (MLC) and 2 regulatory light chain subunits (MLC-2).

The protein localises to the cytoplasm. The protein resides in the myofibril. Functionally, muscle contraction. In Rattus norvegicus (Rat), this protein is Myosin-4.